We begin with the raw amino-acid sequence, 290 residues long: Eukaryotic translation initiation factor 3 subunit G (290 aa).

Basic and acidic residues predominate over residues 1–12; it reads MADSKQSNRDWA. 2 disordered regions span residues 1–30 and 173–192; these read MADS…STDA and AGET…ATGA. The region spanning 204-285 is the RRM domain; that stretch reads PTLRVTSLSI…LILEVAWSQP (82 aa).

This sequence belongs to the eIF-3 subunit G family. As to quaternary structure, component of the eukaryotic translation initiation factor 3 (eIF-3) complex.

Its subcellular location is the cytoplasm. In terms of biological role, RNA-binding component of the eukaryotic translation initiation factor 3 (eIF-3) complex, which is involved in protein synthesis of a specialized repertoire of mRNAs and, together with other initiation factors, stimulates binding of mRNA and methionyl-tRNAi to the 40S ribosome. The eIF-3 complex specifically targets and initiates translation of a subset of mRNAs involved in cell proliferation. This subunit can bind 18S rRNA. The protein is Eukaryotic translation initiation factor 3 subunit G of Cryptococcus neoformans var. neoformans serotype D (strain B-3501A) (Filobasidiella neoformans).